Here is a 315-residue protein sequence, read N- to C-terminus: tRNA-dihydrouridine(16) synthase (315 aa).

Residues 7 to 9 and glutamine 68 contribute to the FMN site; that span reads PME. Residue cysteine 98 is the Proton donor of the active site. Residues lysine 139, 199–201, and 223–224 each bind FMN; these read NGE and GR.

The protein belongs to the Dus family. DusC subfamily. The cofactor is FMN.

The enzyme catalyses 5,6-dihydrouridine(16) in tRNA + NADP(+) = uridine(16) in tRNA + NADPH + H(+). The catalysed reaction is 5,6-dihydrouridine(16) in tRNA + NAD(+) = uridine(16) in tRNA + NADH + H(+). Its function is as follows. Catalyzes the synthesis of 5,6-dihydrouridine (D), a modified base found in the D-loop of most tRNAs, via the reduction of the C5-C6 double bond in target uridines. Specifically modifies U16 in tRNAs. The polypeptide is tRNA-dihydrouridine(16) synthase (Aquipseudomonas alcaligenes (Pseudomonas alcaligenes)).